We begin with the raw amino-acid sequence, 162 residues long: Caveolin-2 (162 aa).

The Cytoplasmic segment spans residues 1–86; it reads MGLETEKTDV…FEISKYVMYK (86 aa). At Tyr19 the chain carries Phosphotyrosine; by SRC. 2 positions are modified to phosphoserine: Ser20 and Ser23. At Tyr27 the chain carries Phosphotyrosine; by SRC. Ser36 carries the post-translational modification Phosphoserine. An intramembrane region (helical) is located at residues 87–107; it reads FLTVFLAIPLAFLAGILFATL. Residues 108 to 162 are Cytoplasmic-facing; the sequence is SCLHIWIIMPFVKTCLMVLPSVQTIWKSVTDAIVAPLCTSIGRSFSSVSLQLSQD.

This sequence belongs to the caveolin family. In terms of assembly, monomer or homodimer. Interacts with CAV1; the interaction forms a stable heterooligomeric complex that is required for targeting to lipid rafts and for caveolae formation. Tyrosine phosphorylated forms do not form heterooligomers with the Tyr-19-phosphorylated form existing as a monomer or dimer, and the Tyr-27-form as a monomer only. Interacts (tyrosine phosphorylated form) with the SH2 domain-containing proteins, RASA1, NCK1 and SRC. Interacts (tyrosine phosphorylated form) with INSR, the interaction (Tyr-27-phosphorylated form) is increased on insulin stimulation. Interacts (Tyr-19 phosphorylated form) with MAPK1 (phosphorylated form); the interaction, promoted by insulin, leads to nuclear location and MAPK1 activation. Interacts with STAT3; the interaction is increased on insulin-induced tyrosine phosphorylation leading to STAT activation. Post-translationally, phosphorylated on serine and tyrosine residues. CAV1 promotes phosphorylation on Ser-23 which then targets the complex to the plasma membrane, lipid rafts and caveolae. Phosphorylation on Ser-36 appears to modulate mitosis in endothelial cells. Phosphorylation on both Tyr-19 and Tyr-27 is required for insulin-induced 'Ser-727' phosphorylation of STAT3 and its activation. Phosphorylation on Tyr-19 is required for insulin-induced phosphorylation of MAPK1 and DNA binding of STAT3. Tyrosine phosphorylation is induced by both EGF and insulin (By. similarity).

The protein localises to the nucleus. The protein resides in the cytoplasm. It is found in the golgi apparatus membrane. It localises to the cell membrane. Its subcellular location is the membrane. The protein localises to the caveola. Functionally, may act as a scaffolding protein within caveolar membranes. Interacts directly with G-protein alpha subunits and can functionally regulate their activity. Acts as an accessory protein in conjunction with CAV1 in targeting to lipid rafts and driving caveolae formation. The Ser-36 phosphorylated form has a role in modulating mitosis in endothelial cells. Positive regulator of cellular mitogenesis of the MAPK signaling pathway. Required for the insulin-stimulated nuclear translocation and activation of MAPK1 and STAT3, and the subsequent regulation of cell cycle progression. In Aotus nancymaae (Ma's night monkey), this protein is Caveolin-2 (CAV2).